The sequence spans 216 residues: LexA repressor (216 aa).

Positions 29-49 (RAEIAQALGFRSPNAAEDHLK) form a DNA-binding region, H-T-H motif. Active-site for autocatalytic cleavage activity residues include serine 134 and lysine 171.

The protein belongs to the peptidase S24 family. In terms of assembly, homodimer.

The catalysed reaction is Hydrolysis of Ala-|-Gly bond in repressor LexA.. Its function is as follows. Represses a number of genes involved in the response to DNA damage (SOS response), including recA and lexA. In the presence of single-stranded DNA, RecA interacts with LexA causing an autocatalytic cleavage which disrupts the DNA-binding part of LexA, leading to derepression of the SOS regulon and eventually DNA repair. The protein is LexA repressor of Bordetella parapertussis (strain 12822 / ATCC BAA-587 / NCTC 13253).